The primary structure comprises 530 residues: Ubiquitin carboxyl-terminal hydrolase 17-like protein 1 (530 aa).

One can recognise a USP domain in the interval Ala-80 to Lys-375. Catalysis depends on Cys-89, which acts as the Nucleophile. The active-site Proton acceptor is the His-334. Basic and acidic residues-rich tracts occupy residues Ser-382–Arg-392 and Asp-398–Asp-411. The disordered stretch occupies residues Ser-382–Asp-411.

Belongs to the peptidase C19 family. USP17 subfamily.

Its subcellular location is the nucleus. The protein resides in the endoplasmic reticulum. It catalyses the reaction Thiol-dependent hydrolysis of ester, thioester, amide, peptide and isopeptide bonds formed by the C-terminal Gly of ubiquitin (a 76-residue protein attached to proteins as an intracellular targeting signal).. In terms of biological role, deubiquitinating enzyme that removes conjugated ubiquitin from specific proteins to regulate different cellular processes that may include cell proliferation, progression through the cell cycle, apoptosis, cell migration, and the cellular response to viral infection. This is Ubiquitin carboxyl-terminal hydrolase 17-like protein 1 (USP17L1) from Homo sapiens (Human).